The following is a 392-amino-acid chain: Glutamate 5-kinase (392 aa).

Residue Lys17 participates in ATP binding. Substrate is bound by residues Ser57, Asp144, and Asn156. 176 to 177 is an ATP binding site; that stretch reads SD. Positions 282-359 constitute a PUA domain; the sequence is AGILSVDAGA…AEIEALLGYA (78 aa). A disordered region spans residues 373-392; the sequence is TEQTGRKAGKSTKKKDEAHA.

It belongs to the glutamate 5-kinase family.

It is found in the cytoplasm. It carries out the reaction L-glutamate + ATP = L-glutamyl 5-phosphate + ADP. It functions in the pathway amino-acid biosynthesis; L-proline biosynthesis; L-glutamate 5-semialdehyde from L-glutamate: step 1/2. Catalyzes the transfer of a phosphate group to glutamate to form L-glutamate 5-phosphate. The protein is Glutamate 5-kinase of Allorhizobium ampelinum (strain ATCC BAA-846 / DSM 112012 / S4) (Agrobacterium vitis (strain S4)).